Here is a 106-residue protein sequence, read N- to C-terminus: Terpredoxin (106 aa).

One can recognise a 2Fe-2S ferredoxin-type domain in the interval 2-106; that stretch reads PRVVFIDEQS…GLIVRVPLPA (105 aa). Positions 40, 46, 49, and 87 each coordinate [2Fe-2S] cluster.

The protein belongs to the adrenodoxin/putidaredoxin family. Requires [2Fe-2S] cluster as cofactor.

Functionally, the oxidation of alpha-terpineol by cytochrome p450-TERP requires the participation of a flavoprotein, terpredoxin reductase, and an iron-sulfur protein, terpredoxin, to mediate the transfer of electrons from NADH to P450 for oxygen activation. This chain is Terpredoxin (terPB), found in Pseudomonas sp.